Reading from the N-terminus, the 785-residue chain is Endonuclease MutS2 (785 aa).

Position 335–342 (Gly-335–Thr-342) interacts with ATP. In terms of domain architecture, Smr spans Leu-710–Lys-785.

The protein belongs to the DNA mismatch repair MutS family. MutS2 subfamily. As to quaternary structure, homodimer. Binds to stalled ribosomes, contacting rRNA.

In terms of biological role, endonuclease that is involved in the suppression of homologous recombination and thus may have a key role in the control of bacterial genetic diversity. Its function is as follows. Acts as a ribosome collision sensor, splitting the ribosome into its 2 subunits. Detects stalled/collided 70S ribosomes which it binds and splits by an ATP-hydrolysis driven conformational change. Acts upstream of the ribosome quality control system (RQC), a ribosome-associated complex that mediates the extraction of incompletely synthesized nascent chains from stalled ribosomes and their subsequent degradation. Probably generates substrates for RQC. This Bacillus velezensis (strain DSM 23117 / BGSC 10A6 / LMG 26770 / FZB42) (Bacillus amyloliquefaciens subsp. plantarum) protein is Endonuclease MutS2.